We begin with the raw amino-acid sequence, 379 residues long: Cytochrome b (379 aa).

The next 4 helical transmembrane spans lie at 33 to 53 (FGSLLGACLTIQVITGLFLAM), 77 to 98 (WTIRYLHANGASMFFMCLFIHV), 113 to 133 (WNIGIMLLFSVMATAFMGYVL), and 178 to 198 (FFALHFILPFIISALAMIHLL). Residues histidine 83 and histidine 97 each contribute to the heme b site. Positions 182 and 196 each coordinate heme b. Histidine 201 lines the a ubiquinone pocket. The next 4 membrane-spanning stretches (helical) occupy residues 226 to 246 (TKDFLGLLLLILLLMTLTLFY), 288 to 308 (LGGVVALILSILILAIIPFLQ), 320 to 340 (LSQFLFWILVADLLTLTWIGG), and 347 to 367 (FISIGQTASILYFSLMVFIMP).

The protein belongs to the cytochrome b family. As to quaternary structure, the cytochrome bc1 complex contains 11 subunits: 3 respiratory subunits (MT-CYB, CYC1 and UQCRFS1), 2 core proteins (UQCRC1 and UQCRC2) and 6 low-molecular weight proteins (UQCRH/QCR6, UQCRB/QCR7, UQCRQ/QCR8, UQCR10/QCR9, UQCR11/QCR10 and a cleavage product of UQCRFS1). This cytochrome bc1 complex then forms a dimer. Heme b is required as a cofactor.

Its subcellular location is the mitochondrion inner membrane. Component of the ubiquinol-cytochrome c reductase complex (complex III or cytochrome b-c1 complex) that is part of the mitochondrial respiratory chain. The b-c1 complex mediates electron transfer from ubiquinol to cytochrome c. Contributes to the generation of a proton gradient across the mitochondrial membrane that is then used for ATP synthesis. The chain is Cytochrome b (MT-CYB) from Lepilemur randrianasoloi (Randrianasoli's sportive lemur).